We begin with the raw amino-acid sequence, 131 residues long: MAANIIKELEREEAQRLLAARAIPEFEPGDTLRVNVRIKEGERERVQAYEGVCIARSGGGVHESFTVRKISFGEGVERLFPLLSPSIESIEVKRRGVVRRAKLYYLRDRRGKSARIAERSNVRKVEVADAE.

This sequence belongs to the bacterial ribosomal protein bL19 family.

Functionally, this protein is located at the 30S-50S ribosomal subunit interface and may play a role in the structure and function of the aminoacyl-tRNA binding site. This Caulobacter sp. (strain K31) protein is Large ribosomal subunit protein bL19.